The chain runs to 766 residues: Deoxynucleotidyltransferase terminal-interacting protein 2 (766 aa).

The disordered stretch occupies residues 1–99 (MVVTRSARPQ…DCSSVPEVQD (99 aa)). Polar residues-rich tracts occupy residues 13–28 (NEAT…NSAV) and 42–56 (SPDN…TTPE). T127 bears the Phosphothreonine mark. Phosphoserine occurs at positions 139, 143, and 146. The interval 155–175 (TEITTRRSKAKSQREPKQESH) is disordered. Basic and acidic residues predominate over residues 166 to 175 (SQREPKQESH). Residues S180 and S190 each carry the phosphoserine modification. K217 is covalently cross-linked (Glycyl lysine isopeptide (Lys-Gly) (interchain with G-Cter in SUMO2)). Phosphothreonine is present on T229. S236, S248, and S250 each carry phosphoserine. K254 participates in a covalent cross-link: Glycyl lysine isopeptide (Lys-Gly) (interchain with G-Cter in SUMO2). S258 is modified (phosphoserine). A Glycyl lysine isopeptide (Lys-Gly) (interchain with G-Cter in SUMO2) cross-link involves residue K327. Residue S334 is modified to Phosphoserine. Disordered stretches follow at residues 345–367 (VSQR…LNHE), 390–450 (KNAI…KDDS), and 520–557 (KAGE…DEDN). A Glycyl lysine isopeptide (Lys-Gly) (interchain with G-Cter in SUMO2) cross-link involves residue K394. Positions 421–434 (DMSKEKEVDSESDT) are enriched in basic and acidic residues. Over residues 435–444 (KPSNLEFNTT) the composition is skewed to polar residues. Residues 515–552 (LDEEDKAGEVATEEEEEEEEEESEEELSDHDRNKDNEF) are a coiled coil. The segment covering 520–542 (KAGEVATEEEEEEEEEESEEELS) has biased composition (acidic residues). The segment at 558 to 615 (LLSNTKSKLLKLMSSSIDTGLNIKELGGLYINFNADKVQLNKRTLTQMKEKRKDELLQ) is tdBR region; mediates interaction with DNTT. Residues K568, K594, and K616 each participate in a glycyl lysine isopeptide (Lys-Gly) (interchain with G-Cter in SUMO2) cross-link. T620 carries the post-translational modification Phosphothreonine. Glycyl lysine isopeptide (Lys-Gly) (interchain with G-Cter in SUMO2) cross-links involve residues K636, K659, K668, K696, and K741.

In terms of assembly, forms a ternary complex with DNTT and core histone; interaction with PCNA releases DNTT and H2A/H2B histones from this ternary complex. Interacts with ESR1, ESR2, PPARG and RXRA. Part of the small subunit (SSU) processome, composed of more than 70 proteins and the RNA chaperone small nucleolar RNA (snoRNA) U3.

Its subcellular location is the nucleus. The protein resides in the nucleolus. In terms of biological role, regulates the transcriptional activity of DNTT and ESR1. May function as a chromatin remodeling protein. Part of the small subunit (SSU) processome, first precursor of the small eukaryotic ribosomal subunit. During the assembly of the SSU processome in the nucleolus, many ribosome biogenesis factors, an RNA chaperone and ribosomal proteins associate with the nascent pre-rRNA and work in concert to generate RNA folding, modifications, rearrangements and cleavage as well as targeted degradation of pre-ribosomal RNA by the RNA exosome. This is Deoxynucleotidyltransferase terminal-interacting protein 2 (DNTTIP2) from Bos taurus (Bovine).